The sequence spans 472 residues: Cannabinoid receptor 1 (472 aa).

The Extracellular segment spans residues 1-116 (MKSILDGLAD…CFMILNPSQQ (116 aa)). A required for mitochondrial localization region spans residues 2 to 23 (KSILDGLADTTFRTITTDLLYV). Asn77 and Asn83 each carry an N-linked (GlcNAc...) asparagine glycan. The chain crosses the membrane as a helical span at residues 117-142 (LAIAVLSLTLGTFTVLENLLVLCVIL). Residues 143–154 (HSRSLRCRPSYH) lie on the Cytoplasmic side of the membrane. The chain crosses the membrane as a helical span at residues 155–175 (FIGSLAVADLLGSVIFVYSFV). Topologically, residues 176–187 (DFHVFHRKDSPN) are extracellular. The helical transmembrane segment at 188 to 212 (VFLFKLGGVTASFTASVGSLFLTAI) threads the bilayer. Over 213–232 (DRYISIHRPLAYKKIVTRPK) the chain is Cytoplasmic. The chain crosses the membrane as a helical span at residues 233–255 (AVVAFCLMWTIAIVIAVLPLLGW). Over 256–273 (NCKKLQSVCSDIFPLIDE) the chain is Extracellular. The chain crosses the membrane as a helical span at residues 274-299 (TYLMFWIGVTSVLLLFIVYAYMYILW). Residues 300–344 (KAHIHAVRMIQRGTQKSIIIHTSEDGKVQVTRPDQARMDIRLAKT) are Cytoplasmic-facing. The chain crosses the membrane as a helical span at residues 345 to 365 (LVLILVVLIICWGPLLAIMVY). Over 366 to 377 (DVFGKMNKLIKT) the chain is Extracellular. Residues 378–399 (VFAFCSMLCLLNSTVNPIIYAL) traverse the membrane as a helical segment. Residues 400–472 (RSKDLRHAFR…VSTNTSAKAL (73 aa)) lie on the Cytoplasmic side of the membrane. Cys415 carries the S-palmitoyl cysteine lipid modification. 2 positions are modified to phosphoserine: Ser425 and Ser429.

The protein belongs to the G-protein coupled receptor 1 family. In terms of assembly, interacts (via C-terminus) with CNRIP1; this interaction attenuates constitutive, but not agonist-dependent, inhibition of voltage-gated Ca(2+) channels in neurons. Associates with G protein alpha subunits, including G(i) alpha-1/GNAI1, G(i) alpha-3/GNAI3 and G(o)-alpha/GNAO1; palmitoylation is important for interaction with GNAI3 and GNAO1. Post-translationally, palmitoylation at Cys-415 is important for recruitment at plasma membrane and lipid rafts and association with G protein alpha subunits. In terms of tissue distribution, expressed in cerebral arterial muscle cells and cerebral cortex (at protein level).

Its subcellular location is the cell membrane. It is found in the membrane raft. It localises to the mitochondrion outer membrane. The protein localises to the cell projection. The protein resides in the axon. Its subcellular location is the presynapse. With respect to regulation, hemopressin, a peptide derived from hemoglobin subunit alpha (HBA1 and/or HBA2), acts as an antagonist peptide: hemopressin-binding efficiently blocks cannabinoid receptor CNR1 and subsequent signaling. Its function is as follows. G-protein coupled receptor for endogenous cannabinoids (eCBs), including N-arachidonoylethanolamide (also called anandamide or AEA) and 2-arachidonoylglycerol (2-AG), as well as phytocannabinoids, such as delta(9)-tetrahydrocannabinol (THC). Mediates many cannabinoid-induced effects, acting, among others, on food intake, memory loss, gastrointestinal motility, catalepsy, ambulatory activity, anxiety, chronic pain. Signaling typically involves reduction in cyclic AMP. In the hypothalamus, may have a dual effect on mitochondrial respiration depending upon the agonist dose and possibly upon the cell type. Increases respiration at low doses, while decreases respiration at high doses. At high doses, CNR1 signal transduction involves G-protein alpha-i protein activation and subsequent inhibition of mitochondrial soluble adenylate cyclase, decrease in cyclic AMP concentration, inhibition of protein kinase A (PKA)-dependent phosphorylation of specific subunits of the mitochondrial electron transport system, including NDUFS2. In the hypothalamus, inhibits leptin-induced reactive oxygen species (ROS) formation and mediates cannabinoid-induced increase in SREBF1 and FASN gene expression. In response to cannabinoids, drives the release of orexigenic beta-endorphin, not that of melanocyte-stimulating hormone alpha/alpha-MSH, from hypothalamic POMC neurons, hence promoting food intake. In the hippocampus, regulates cellular respiration and energy production in response to cannabinoids. Involved in cannabinoid-dependent depolarization-induced suppression of inhibition (DSI), a process in which depolarization of CA1 postsynaptic pyramidal neurons mobilizes eCBs, which retrogradely activate presynaptic CB1 receptors, transiently decreasing GABAergic inhibitory neurotransmission. Also reduces excitatory synaptic transmission. In superior cervical ganglions and cerebral vascular smooth muscle cells, inhibits voltage-gated Ca(2+) channels in a constitutive, as well as agonist-dependent manner. In cerebral vascular smooth muscle cells, inhibition of voltage-gated Ca(2+) channels leads to vasodilation and decrease in vascular tone. Induces leptin production in adipocytes and reduces LRP2-mediated leptin clearance in the kidney, hence participating in hyperleptinemia. In adipose tissue, CNR1 signaling leads to increased expression of SREBF1, ACACA and FASN genes. In the liver, activation by endocannabinoids leads to increased de novo lipogenesis and reduced fatty acid catabolism, associated with increased expression of SREBF1/SREBP-1, GCK, ACACA, ACACB and FASN genes. May also affect de novo cholesterol synthesis and HDL-cholesteryl ether uptake. Peripherally modulates energy metabolism. In high carbohydrate diet-induced obesity, may decrease the expression of mitochondrial dihydrolipoyl dehydrogenase/DLD in striated muscles, as well as that of selected glucose/ pyruvate metabolic enzymes, hence affecting energy expenditure through mitochondrial metabolism. In response to cannabinoid anandamide, elicits a pro-inflammatory response in macrophages, which involves NLRP3 inflammasome activation and IL1B and IL18 secretion. In macrophages infiltrating pancreatic islets, this process may participate in the progression of type-2 diabetes and associated loss of pancreatic beta-cells. The protein is Cannabinoid receptor 1 (CNR1) of Felis catus (Cat).